The following is a 427-amino-acid chain: Adenylosuccinate synthetase (427 aa).

Residues 12–18 and 40–42 each bind GTP; these read GDEGKGK and GHT. Aspartate 13 functions as the Proton acceptor in the catalytic mechanism. Residues aspartate 13 and glycine 40 each contribute to the Mg(2+) site. IMP contacts are provided by residues 13–16, 38–41, threonine 126, arginine 140, glutamine 221, threonine 236, and arginine 299; these read DEGK and NAGH. Histidine 41 (proton donor) is an active-site residue. 295 to 301 serves as a coordination point for substrate; the sequence is STTKRPR. GTP-binding positions include arginine 301, 327–329, and 409–411; these read KLD and SVG.

This sequence belongs to the adenylosuccinate synthetase family. As to quaternary structure, homodimer. It depends on Mg(2+) as a cofactor.

It is found in the cytoplasm. The catalysed reaction is IMP + L-aspartate + GTP = N(6)-(1,2-dicarboxyethyl)-AMP + GDP + phosphate + 2 H(+). The protein operates within purine metabolism; AMP biosynthesis via de novo pathway; AMP from IMP: step 1/2. Functionally, plays an important role in the de novo pathway of purine nucleotide biosynthesis. Catalyzes the first committed step in the biosynthesis of AMP from IMP. This is Adenylosuccinate synthetase from Borrelia recurrentis (strain A1).